The following is a 206-amino-acid chain: Superoxide dismutase [Mn] (206 aa).

Mn(2+) contacts are provided by His-30, His-78, Asp-166, and His-170.

It belongs to the iron/manganese superoxide dismutase family. In terms of assembly, homodimer. The cofactor is Mn(2+).

It catalyses the reaction 2 superoxide + 2 H(+) = H2O2 + O2. In terms of biological role, destroys superoxide anion radicals which are normally produced within the cells and which are toxic to biological systems. This is Superoxide dismutase [Mn] (sodA) from Chlamydia trachomatis serovar D (strain ATCC VR-885 / DSM 19411 / UW-3/Cx).